Reading from the N-terminus, the 697-residue chain is SITS-binding protein (697 aa).

The tract at residues 1–20 (MARRAKKMASNSGDSSPEPG) is disordered. Topologically, residues 2-29 (ARRAKKMASNSGDSSPEPGIKEINETWK) are cytoplasmic. Residues 30–50 (GAIACLGVALLFLMTIGVLYW) form a helical membrane-spanning segment. 6 N-linked (GlcNAc...) asparagine glycosylation sites follow: Asn-112, Asn-134, Asn-162, Asn-386, Asn-405, and Asn-470. 2 helical membrane passes run 503–521 (GLIP…FFIP) and 542–562 (WMQI…WVFG). An N-linked (GlcNAc...) asparagine glycan is attached at Asn-568.

The protein belongs to the glycosyl hydrolase 31 family. As to quaternary structure, homodimer; disulfide-linked. As to expression, electroplax tissue, brain (200-fold less), and heart (500-fold less).

It is found in the membrane. Its function is as follows. This glycoprotein is probably not a functional part of the chloride channel. This Tetronarce californica (Pacific electric ray) protein is SITS-binding protein.